A 264-amino-acid chain; its full sequence is Tropomyosin Cha f 1.0101 (264 aa).

The residue at position 1 (methionine 1) is an N-acetylmethionine. Disordered stretches follow at residues 1–56 and 92–126; these read MDAI…VENE and IQLP…SERM. Residues 1–264 adopt a coiled-coil conformation; that stretch reads MDAIKKKMQA…RLEDELVNEK (264 aa). Residues 12-45 are compositionally biased toward basic and acidic residues; sequence KLEKDNAMDRADTLEQQNKEANLRAEKTEEEIRA.

It belongs to the tropomyosin family. As to quaternary structure, homodimer. Expressed in muscle (at protein level). Expressed in claw muscles.

Its function is as follows. Tropomyosin, in association with the troponin complex, plays a central role in the calcium dependent regulation of muscle contraction. This Charybdis feriata (Crucifix crab) protein is Tropomyosin Cha f 1.0101.